Reading from the N-terminus, the 883-residue chain is Phosphoenolpyruvate carboxylase (883 aa).

Residues H138 and K546 contribute to the active site.

The protein belongs to the PEPCase type 1 family. It depends on Mg(2+) as a cofactor.

It catalyses the reaction oxaloacetate + phosphate = phosphoenolpyruvate + hydrogencarbonate. Functionally, forms oxaloacetate, a four-carbon dicarboxylic acid source for the tricarboxylic acid cycle. This is Phosphoenolpyruvate carboxylase from Salmonella choleraesuis (strain SC-B67).